Here is a 481-residue protein sequence, read N- to C-terminus: MHSILFATSEAYPLIKTGGLADVAASLPRALLKLGHDVRILLPAYESLLAKAASQGLKTLGEISLDDINLTLHQTRLPGTRVTVWLVDIPEFSARAGNPYCGADGNDWYDNHLRFYWFARAAEAIALNQAGLNWQPDIVHCNDWQTGLIPALLSLHPERPATLFTIHNLAYRGLFSYQAFGELNLPPAFWHHERLEFYGQMSFMKGGLAFADFITTVSPSYAQEIQLPEHGYGLDGLIRYRQESLSGILNGIDTDEWNPGKDKHLAATYNRRTLGNKTKNKLALQETLGLALNADVPLLGFIGRLVDQKGIDLILNQLPLLLEQDCQLVVLGSGFPHYEQRLREVARQYPDRVSVTIGYDEGLAHQIEAGCDIFLMPSIFEPCGLNQMYSLRYGTLPVVHAVGGLKDTVQERPLDNPGEDANGFVFHSPDALDLHAAILRALDAYRQPATWKQLQINAMNRDSSWEQSAKAYEAIYANLCS.

K16 provides a ligand contact to ADP-alpha-D-glucose.

This sequence belongs to the glycosyltransferase 1 family. Bacterial/plant glycogen synthase subfamily.

It catalyses the reaction [(1-&gt;4)-alpha-D-glucosyl](n) + ADP-alpha-D-glucose = [(1-&gt;4)-alpha-D-glucosyl](n+1) + ADP + H(+). The protein operates within glycan biosynthesis; glycogen biosynthesis. In terms of biological role, synthesizes alpha-1,4-glucan chains using ADP-glucose. This is Glycogen synthase from Cellvibrio japonicus (strain Ueda107) (Pseudomonas fluorescens subsp. cellulosa).